A 330-amino-acid chain; its full sequence is Ketol-acid reductoisomerase (NADP(+)) (330 aa).

Residues 3–184 form the KARI N-terminal Rossmann domain; sequence LPVYYDKDID…GGGRMGVLET (182 aa). NADP(+) is bound by residues 26–29, S52, and S54; that span reads YGAQ. The active site involves H109. G135 lines the NADP(+) pocket. Residues 185-329 enclose the KARI C-terminal knotted domain; that stretch reads SFKEECESDL…EILRAPFNHK (145 aa). The Mg(2+) site is built by D193, E197, E229, and E233. S254 is a binding site for substrate.

Belongs to the ketol-acid reductoisomerase family. The cofactor is Mg(2+).

The enzyme catalyses (2R)-2,3-dihydroxy-3-methylbutanoate + NADP(+) = (2S)-2-acetolactate + NADPH + H(+). The catalysed reaction is (2R,3R)-2,3-dihydroxy-3-methylpentanoate + NADP(+) = (S)-2-ethyl-2-hydroxy-3-oxobutanoate + NADPH + H(+). It participates in amino-acid biosynthesis; L-isoleucine biosynthesis; L-isoleucine from 2-oxobutanoate: step 2/4. It functions in the pathway amino-acid biosynthesis; L-valine biosynthesis; L-valine from pyruvate: step 2/4. Its function is as follows. Involved in the biosynthesis of branched-chain amino acids (BCAA). Catalyzes an alkyl-migration followed by a ketol-acid reduction of (S)-2-acetolactate (S2AL) to yield (R)-2,3-dihydroxy-isovalerate. In the isomerase reaction, S2AL is rearranged via a Mg-dependent methyl migration to produce 3-hydroxy-3-methyl-2-ketobutyrate (HMKB). In the reductase reaction, this 2-ketoacid undergoes a metal-dependent reduction by NADPH to yield (R)-2,3-dihydroxy-isovalerate. The protein is Ketol-acid reductoisomerase (NADP(+)) of Helicobacter pylori (strain ATCC 700392 / 26695) (Campylobacter pylori).